Here is a 145-residue protein sequence, read N- to C-terminus: Oocyte zinc finger protein XlCOF8.4I (145 aa).

The disordered stretch occupies residues 1-25 (HKREADFCSKGNLTNPEISPVEHYP). Residues 123–145 (LSCSECGKCFSTYHVLARHQKTH) form a C2H2-type zinc finger.

It belongs to the krueppel C2H2-type zinc-finger protein family.

The protein localises to the nucleus. May be involved in transcriptional regulation. The polypeptide is Oocyte zinc finger protein XlCOF8.4I (Xenopus laevis (African clawed frog)).